The following is a 149-amino-acid chain: Heat shock protein beta-3 (149 aa).

The sHSP domain occupies 47–149 (KARAAQAPPV…VEVKDSAGTK (103 aa)).

This sequence belongs to the small heat shock protein (HSP20) family.

It localises to the cytoplasm. The protein localises to the nucleus. Functionally, inhibitor of actin polymerization. This is Heat shock protein beta-3 (HSPB3) from Bos taurus (Bovine).